The following is a 169-amino-acid chain: Methane monooxygenase component A gamma chain (169 aa).

As to quaternary structure, m.trichosporium has two forms of methane monooxygenase, a soluble and a membrane-bound type. The soluble type consists of four components (A to D): protein A, comprising three chains, in an alpha-2, beta-2, gamma-2 configuration, is a nonheme iron protein containing an unusual mu-hydroxo bridge structure at its active site and interacts with both oxygen and methane.

The catalysed reaction is methane + NADH + O2 + H(+) = methanol + NAD(+) + H2O. The enzyme catalyses methane + NADPH + O2 + H(+) = methanol + NADP(+) + H2O. Functionally, responsible for the initial oxygenation of methane to methanol in methanotrophs. It also catalyzes the monohydroxylation of a variety of unactivated alkenes, alicyclic, aromatic and heterocyclic compounds. In Methylosinus trichosporium, this protein is Methane monooxygenase component A gamma chain (mmoZ).